The chain runs to 137 residues: uncharacterized protein (137 aa).

The signal sequence occupies residues M1–G15. A lipid anchor (N-palmitoyl cysteine) is attached at C16. C16 carries S-diacylglycerol cysteine lipidation.

It localises to the cell membrane. This is an uncharacterized protein from Escherichia coli (strain K12).